The following is a 269-amino-acid chain: Thiazole synthase (269 aa).

The active-site Schiff-base intermediate with DXP is the Lys112. Residues Gly173, 199 to 200 (AG), and 221 to 222 (NT) each bind 1-deoxy-D-xylulose 5-phosphate.

It belongs to the ThiG family. As to quaternary structure, homotetramer. Forms heterodimers with either ThiH or ThiS.

It is found in the cytoplasm. It carries out the reaction [ThiS sulfur-carrier protein]-C-terminal-Gly-aminoethanethioate + 2-iminoacetate + 1-deoxy-D-xylulose 5-phosphate = [ThiS sulfur-carrier protein]-C-terminal Gly-Gly + 2-[(2R,5Z)-2-carboxy-4-methylthiazol-5(2H)-ylidene]ethyl phosphate + 2 H2O + H(+). It functions in the pathway cofactor biosynthesis; thiamine diphosphate biosynthesis. Its function is as follows. Catalyzes the rearrangement of 1-deoxy-D-xylulose 5-phosphate (DXP) to produce the thiazole phosphate moiety of thiamine. Sulfur is provided by the thiocarboxylate moiety of the carrier protein ThiS. In vitro, sulfur can be provided by H(2)S. In Caulobacter vibrioides (strain ATCC 19089 / CIP 103742 / CB 15) (Caulobacter crescentus), this protein is Thiazole synthase.